Reading from the N-terminus, the 262-residue chain is Dehydrin COR410 (262 aa).

2 disordered regions span residues 1–153 (MEDE…HDTD) and 187–262 (LPGG…KPSA). 2 stretches are compositionally biased toward basic and acidic residues: residues 34–45 (KKAEEDKEKEEE) and 53–74 (VSVE…KETL). Over residues 89–101 (SDEEEEEVIDDNG) the composition is skewed to acidic residues. Tandem repeats lie at residues 106–126 (RKKK…HKDT) and 173–193 (EEEK…GHKK). The segment at 106–245 (RKKKKGLKEK…MDKLPGYHKT (140 aa)) is 3 X 21 AA repeats, Lys-rich. Composition is skewed to basic and acidic residues over residues 113–130 (KEKL…EGEH) and 187–196 (LPGGHKKPED). Positions 197-209 (AAAVPVTHAAPAP) are enriched in low complexity. Residues 225–245 (AKEKKGLLGKIMDKLPGYHKT) form repeat 3. Over residues 244–262 (KTGEEDKAAAATGEHKPSA) the composition is skewed to basic and acidic residues.

In terms of tissue distribution, expressed in roots, crown and leaves during cold acclimation.

The polypeptide is Dehydrin COR410 (COR410) (Triticum aestivum (Wheat)).